Here is a 461-residue protein sequence, read N- to C-terminus: Dihydrofolate reductase (461 aa).

In terms of domain architecture, DHFR spans 233–447; sequence DLTMIVAVSS…VEIEFELYGK (215 aa). NADP(+)-binding positions include Ala-239 and 246-252; that span reads GIGKKNS. 260–265 is a substrate binding site; that stretch reads EMAYFA. 292–294 provides a ligand contact to NADP(+); it reads RSC. Arg-308 provides a ligand contact to substrate. Residues 314 to 316 and 365 to 372 contribute to the NADP(+) site; these read TRN and GGSFLYGS.

It belongs to the dihydrofolate reductase family.

It catalyses the reaction (6S)-5,6,7,8-tetrahydrofolate + NADP(+) = 7,8-dihydrofolate + NADPH + H(+). It functions in the pathway cofactor biosynthesis; tetrahydrofolate biosynthesis; 5,6,7,8-tetrahydrofolate from 7,8-dihydrofolate: step 1/1. Its function is as follows. Key enzyme in folate metabolism. Catalyzes an essential reaction for de novo glycine and purine synthesis, and for DNA precursor synthesis. This is Dihydrofolate reductase (dfr1) from Schizosaccharomyces pombe (strain 972 / ATCC 24843) (Fission yeast).